The primary structure comprises 180 residues: Insulin-like growth factor 2 (180 aa).

An N-terminal signal peptide occupies residues 1 to 24 (MGIPVGKSMLVLLISLAFALCCIA). The tract at residues 25–52 (AYRPSETLCGGELVDTLQFVCSDRGFYF) is b. 3 disulfide bridges follow: Cys-33–Cys-71, Cys-45–Cys-84, and Cys-70–Cys-75. The segment at 53 to 64 (SRPSSRANRRSR) is c. Positions 65 to 85 (GIVEECCFRSCDLALLETYCA) are a. The tract at residues 86–91 (TPAKSE) is d. A propeptide spans 92–180 (RDVSTSQAVL…ASSEMSSNHQ (89 aa)) (e peptide). The segment at 160-180 (VLPPKDPAHGGASSEMSSNHQ) is disordered.

It belongs to the insulin family. Interacts with MYORG; this interaction is required for IGF2 secretion. Interacts with integrins ITGAV:ITGB3 and ITGA6:ITGB4; integrin-binding is required for IGF2 signaling. Interacts with IGFBP2. Post-translationally, proteolytically processed by PCSK4, proIGF2 is cleaved at Arg-128 and Arg-92 to generate big-IGF2 and mature IGF2.

The protein localises to the secreted. The insulin-like growth factors possess growth-promoting activity. Major fetal growth hormone in mammals. Plays a key role in regulating fetoplacental development. IGF2 is influenced by placental lactogen. Also involved in tissue differentiation. In adults, involved in glucose metabolism in adipose tissue, skeletal muscle and liver. Acts as a ligand for integrin which is required for IGF2 signaling. Positively regulates myogenic transcription factor MYOD1 function by facilitating the recruitment of transcriptional coactivators, thereby controlling muscle terminal differentiation. Inhibits myoblast differentiation and modulates metabolism via increasing the mitochondrial respiration rate. In terms of biological role, preptin undergoes glucose-mediated co-secretion with insulin, and acts as a physiological amplifier of glucose-mediated insulin secretion. Exhibits osteogenic properties by increasing osteoblast mitogenic activity through phosphoactivation of MAPK1 and MAPK3. In Rattus norvegicus (Rat), this protein is Insulin-like growth factor 2.